The sequence spans 242 residues: Biosynthetic peptidoglycan transglycosylase (242 aa).

The helical transmembrane segment at 19-39 threads the bilayer; the sequence is ILAALAVFWGGGIALFSVVPV.

This sequence belongs to the glycosyltransferase 51 family.

The protein localises to the cell inner membrane. It catalyses the reaction [GlcNAc-(1-&gt;4)-Mur2Ac(oyl-L-Ala-gamma-D-Glu-L-Lys-D-Ala-D-Ala)](n)-di-trans,octa-cis-undecaprenyl diphosphate + beta-D-GlcNAc-(1-&gt;4)-Mur2Ac(oyl-L-Ala-gamma-D-Glu-L-Lys-D-Ala-D-Ala)-di-trans,octa-cis-undecaprenyl diphosphate = [GlcNAc-(1-&gt;4)-Mur2Ac(oyl-L-Ala-gamma-D-Glu-L-Lys-D-Ala-D-Ala)](n+1)-di-trans,octa-cis-undecaprenyl diphosphate + di-trans,octa-cis-undecaprenyl diphosphate + H(+). Its pathway is cell wall biogenesis; peptidoglycan biosynthesis. Its function is as follows. Peptidoglycan polymerase that catalyzes glycan chain elongation from lipid-linked precursors. The sequence is that of Biosynthetic peptidoglycan transglycosylase from Salmonella schwarzengrund (strain CVM19633).